Reading from the N-terminus, the 193-residue chain is Ancillary SecYEG translocon subunit (193 aa).

Topologically, residues 1-11 (MIKNSYINEKL) are cytoplasmic. The chain crosses the membrane as a helical span at residues 12–34 (NFYQKSFLTCMLLIVIVIVYFFS). The Extracellular segment spans residues 35-193 (KNYLDKPKNS…IIQMKINNYN (159 aa)).

The protein belongs to the YfgM family. In terms of assembly, interacts with the Sec translocon. Forms a complex with PpiD.

Its subcellular location is the cell membrane. Functionally, may mediate protein transfer from the Sec translocon to the chaperone network via its extracellular C-terminal region. The protein is Ancillary SecYEG translocon subunit of Buchnera aphidicola subsp. Baizongia pistaciae (strain Bp).